A 331-amino-acid chain; its full sequence is 6-phosphogluconolactonase (331 aa).

The protein belongs to the cycloisomerase 2 family.

It catalyses the reaction 6-phospho-D-glucono-1,5-lactone + H2O = 6-phospho-D-gluconate + H(+). Its pathway is carbohydrate degradation; pentose phosphate pathway; D-ribulose 5-phosphate from D-glucose 6-phosphate (oxidative stage): step 2/3. Catalyzes the hydrolysis of 6-phosphogluconolactone to 6-phosphogluconate. The sequence is that of 6-phosphogluconolactonase from Salmonella typhi.